The following is a 301-amino-acid chain: UDP-N-acetylenolpyruvoylglucosamine reductase (301 aa).

In terms of domain architecture, FAD-binding PCMH-type spans 30–194; that stretch reads VGGEADYLVF…LSVKFALAPG (165 aa). Arg-173 is a catalytic residue. Catalysis depends on Ser-223, which acts as the Proton donor. Glu-293 is an active-site residue.

This sequence belongs to the MurB family. FAD is required as a cofactor.

It localises to the cytoplasm. It catalyses the reaction UDP-N-acetyl-alpha-D-muramate + NADP(+) = UDP-N-acetyl-3-O-(1-carboxyvinyl)-alpha-D-glucosamine + NADPH + H(+). It functions in the pathway cell wall biogenesis; peptidoglycan biosynthesis. Its function is as follows. Cell wall formation. This Streptococcus pneumoniae (strain 70585) protein is UDP-N-acetylenolpyruvoylglucosamine reductase.